A 530-amino-acid chain; its full sequence is Inactive ubiquitin carboxyl-terminal hydrolase 17-like protein 8 (530 aa).

Residues 80-375 form the USP domain; the sequence is AGLQNMGNTC…QAYVLFYIQK (296 aa). The span at 382–392 shows a compositional bias: basic and acidic residues; it reads SESVSRGREPR. 2 disordered regions span residues 382-412 and 493-530; these read SESV…KRDH and NSTD…LVCQ. Residues 495-510 show a composition bias toward polar residues; the sequence is TDQESMNTGTLASLQG. Residues 511–524 show a composition bias toward basic residues; that stretch reads RTRRSKGKNKHSKR.

Belongs to the peptidase C19 family. USP17 subfamily.

It localises to the nucleus. Its subcellular location is the endoplasmic reticulum. The chain is Inactive ubiquitin carboxyl-terminal hydrolase 17-like protein 8 (USP17L8) from Homo sapiens (Human).